A 328-amino-acid polypeptide reads, in one-letter code: Peroxidase 25 (328 aa).

The signal sequence occupies residues 1–26; it reads MGVYLGKYCYIMIIMLVLVLGKEVRS. 4 cysteine pairs are disulfide-bonded: Cys-38/Cys-114, Cys-71/Cys-76, Cys-120/Cys-324, and Cys-198/Cys-230. The active-site Proton acceptor is His-69. Residues Asp-70, Val-73, Gly-75, Asp-77, and Ser-79 each coordinate Ca(2+). Position 161 (Pro-161) interacts with substrate. His-191 serves as a coordination point for heme b. Thr-192 contacts Ca(2+). Asn-207 carries an N-linked (GlcNAc...) asparagine glycan. Ca(2+) contacts are provided by Asp-243, Ser-246, and Asp-251.

This sequence belongs to the peroxidase family. Classical plant (class III) peroxidase subfamily. Heme b serves as cofactor. Requires Ca(2+) as cofactor.

Its subcellular location is the secreted. The enzyme catalyses 2 a phenolic donor + H2O2 = 2 a phenolic radical donor + 2 H2O. In terms of biological role, removal of H(2)O(2), oxidation of toxic reductants, biosynthesis and degradation of lignin, suberization, auxin catabolism, response to environmental stresses such as wounding, pathogen attack and oxidative stress. These functions might be dependent on each isozyme/isoform in each plant tissue. In Arabidopsis thaliana (Mouse-ear cress), this protein is Peroxidase 25 (PER25).